We begin with the raw amino-acid sequence, 638 residues long: Rik1-associated factor 1 (638 aa).

WD repeat units lie at residues 297–336 (KEYSTISDLCFSKGNLFLYTGAFDNAVKVWDMEGNLCGIF), 486–525 (TTQKDINHATISNSGILVTSSGTDNQTFVWDSRKPDKPLS), 544–583 (EVDAGINMAQWQPKGNLFVTGGSDGIVKVWDLRLNNPFIQ), and 587–626 (EMNSAITYGGFSEDASKLTVCCVGGDVNMYSLGNDNGNKF).

Component of the Clr4 methyltransferase complex (ClrC) composed of at least clr4, rik1, pcu4, rbx1, raf1 and raf2. The cullin pcu4, rik1, raf1, raf2 and the ring-box protein rbx1 are components of an E3 ubiquitin ligase, whose activity is essential for heterochromatin assembly. Interacts with nup189.

It is found in the cytoplasm. Its subcellular location is the nucleus. The protein localises to the chromosome. In terms of biological role, component of the Clr4 methyltransferase complex (ClrC) which contributes to the establishment of heterochromatin by specifically methylating histone H3 to form H3K9me. ClrC preferentially ubiquitylates H3K14 and ClrC-mediated H3 ubiquitination promotes clr4 methyltransferase activity for the methylation of H3K9. H3K9me represents a specific tag for epigenetic transcriptional repression by recruiting swi6/HP1 to methylated histones which leads to transcriptional silencing within centromeric heterochromatin, telomeric regions and at the silent mating-type loci. Has a role in both mitotic and meiotic chromosome segregation. The protein is Rik1-associated factor 1 (raf1) of Schizosaccharomyces pombe (strain 972 / ATCC 24843) (Fission yeast).